The chain runs to 475 residues: Probable L-cysteine desulfhydrase, chloroplastic (475 aa).

The N-terminal 24 residues, 1–24 (MASSLSPPEEASYHHRHTKRYTSS), are a transit peptide targeting the chloroplast. Residues 1–40 (MASSLSPPEEASYHHRHTKRYTSSASSASSTTNGTVESSV) are disordered. Residues 22-32 (TSSASSASSTT) show a composition bias toward low complexity. K284 is modified (N6-(pyridoxal phosphate)lysine).

This sequence belongs to the class-V pyridoxal-phosphate-dependent aminotransferase family. Interacts in vitro with QS.

The protein localises to the plastid. It is found in the chloroplast. In terms of biological role, may catalyze the production of hydrogen sulfide (H2S) from cysteine. The sequence is that of Probable L-cysteine desulfhydrase, chloroplastic from Arabidopsis thaliana (Mouse-ear cress).